A 1083-amino-acid polypeptide reads, in one-letter code: FACT complex subunit spt16 (1083 aa).

Position 437 is a phosphoserine (Ser437). Residues 466–504 adopt a coiled-coil conformation; it reads LESKLRNEINTEEKRKEHQRELAQQLNERAKDRLARQGN. Residues 923–1083 are disordered; sequence FEQGGWTFLD…NGHKSKKSRH (161 aa). A compositionally biased stretch (acidic residues) spans 935–987; that stretch reads SGSEGENETAESEEDEAYNPTDAESDEESDEDSEYSEASEDSEESDEDLGSDE. The segment covering 988 to 1023 has biased composition (basic and acidic residues); the sequence is ESGKDWSDLEREAAEEDRNHDYAADDKPRNGKFDSK. Basic residues predominate over residues 1024-1033; it reads KHGKSSKHSP. A compositionally biased stretch (basic and acidic residues) spans 1058 to 1076; the sequence is SSKDKDRKRSRDDSRDNGH.

It belongs to the peptidase M24 family. SPT16 subfamily. Component of the FACT complex, a stable heterodimer of dre4/spt16 and Ssrp. Interacts with TRL/GAGA.

Its subcellular location is the nucleus. It is found in the chromosome. Its function is as follows. Component of the FACT complex, a general chromatin factor that acts to reorganize nucleosomes. The FACT complex is involved in multiple processes that require DNA as a template such as mRNA elongation, DNA replication and DNA repair. During transcription elongation the FACT complex acts as a histone chaperone that both destabilizes and restores nucleosomal structure. It facilitates the passage of RNA polymerase II and transcription by promoting the dissociation of one histone H2A-H2B dimer from the nucleosome, then subsequently promotes the reestablishment of the nucleosome following the passage of RNA polymerase II. The FACT complex is required for expression of Hox genes. In Drosophila melanogaster (Fruit fly), this protein is FACT complex subunit spt16 (dre4).